The primary structure comprises 1850 residues: Chitin synthase V (1850 aa).

The tract at residues 1 to 27 (MASTLPPLGGGNGGPHTQHSLPSLPAH) is disordered. The Myosin motor domain occupies 1–779 (MASTLPPLGG…EIAGLVDGSA (779 aa)). 105-112 (GESGSGKS) is a binding site for ATP. N-linked (GlcNAc...) asparagine glycosylation is found at asparagine 245, asparagine 290, asparagine 427, asparagine 481, and asparagine 558. Residues 289–309 (NNTSATGDDSGGFSHEGGQTS) form a disordered region. A disordered region spans residues 593 to 647 (SKPMRAPSVMSRKGGRGRGIASQRRQQESNLFDSGNTHAESRSPKGGNKGGIDQG). The span at 620–630 (ESNLFDSGNTH) shows a compositional bias: polar residues. The actin-binding stretch occupies residues 656–680 (LDNVQKAVTDPGTNAYFVFCLKPND). The next 2 helical transmembrane spans lie at 884-904 (WVFT…RWIG) and 923-943 (MLIW…PMLI). Positions 947 to 1006 (QNVFSAAELSSHNGKDGNSAYVSIRGHVIDLGSFADRHYPSFVSRKTMLNYAGMDVSSLF) constitute a Cytochrome b5 heme-binding domain. N-linked (GlcNAc...) asparagine glycosylation is found at asparagine 1033, asparagine 1058, and asparagine 1186. A helical transmembrane segment spans residues 1196 to 1216 (LVLAVSILLVSVIAFKFFAAL). N-linked (GlcNAc...) asparagine glycosylation is found at asparagine 1453 and asparagine 1559. Helical transmembrane passes span 1568 to 1588 (LIPM…VVFI), 1590 to 1610 (LLST…IVLV), 1617 to 1637 (VPIT…IIFI), and 1644 to 1664 (MVGW…GLPL). Asparagine 1767 carries an N-linked (GlcNAc...) asparagine glycan. The DEK-C domain maps to 1800 to 1850 (LPSDDALLAEIRDILKTADLMTVTKKGIKQELERRFDVPLDAKRAYINSGK).

The protein in the N-terminal section; belongs to the TRAFAC class myosin-kinesin ATPase superfamily. Myosin family. It in the C-terminal section; belongs to the chitin synthase family. Class V subfamily. Expressed in conidia and during appressorium formation.

It is found in the cell membrane. It localises to the cell septum. The protein resides in the cell tip. It carries out the reaction [(1-&gt;4)-N-acetyl-beta-D-glucosaminyl](n) + UDP-N-acetyl-alpha-D-glucosamine = [(1-&gt;4)-N-acetyl-beta-D-glucosaminyl](n+1) + UDP + H(+). Polymerizes chitin, a structural polymer of the cell wall and septum, by transferring the sugar moiety of UDP-GlcNAc to the non-reducing end of the growing chitin polymer. Contributes to the production of conidia and the ability of fungal conidia to germinate. Involved in the fungal cell wall integrity and the ability of conidia to withstand biophysical pressure. Required for appressorium formation and evasion of insect cellular and/or humoral defenses, promoting the fungal dimorphic transition to the production of hyphal bodies that occurs within hosts, and ultimately to virulence. The polypeptide is Chitin synthase V (Metarhizium acridum (strain CQMa 102)).